A 219-amino-acid polypeptide reads, in one-letter code: Thiamine-phosphate synthase (219 aa).

4-amino-2-methyl-5-(diphosphooxymethyl)pyrimidine-binding positions include 44–48 (QFREK) and Asn79. Mg(2+)-binding residues include Asp80 and Asp99. Residue Ser117 participates in 4-amino-2-methyl-5-(diphosphooxymethyl)pyrimidine binding. 143–145 (TST) serves as a coordination point for 2-[(2R,5Z)-2-carboxy-4-methylthiazol-5(2H)-ylidene]ethyl phosphate. Lys146 lines the 4-amino-2-methyl-5-(diphosphooxymethyl)pyrimidine pocket. 2-[(2R,5Z)-2-carboxy-4-methylthiazol-5(2H)-ylidene]ethyl phosphate is bound by residues Gly175 and 195-196 (IS).

The protein belongs to the thiamine-phosphate synthase family. Mg(2+) is required as a cofactor.

It catalyses the reaction 2-[(2R,5Z)-2-carboxy-4-methylthiazol-5(2H)-ylidene]ethyl phosphate + 4-amino-2-methyl-5-(diphosphooxymethyl)pyrimidine + 2 H(+) = thiamine phosphate + CO2 + diphosphate. It carries out the reaction 2-(2-carboxy-4-methylthiazol-5-yl)ethyl phosphate + 4-amino-2-methyl-5-(diphosphooxymethyl)pyrimidine + 2 H(+) = thiamine phosphate + CO2 + diphosphate. The enzyme catalyses 4-methyl-5-(2-phosphooxyethyl)-thiazole + 4-amino-2-methyl-5-(diphosphooxymethyl)pyrimidine + H(+) = thiamine phosphate + diphosphate. It functions in the pathway cofactor biosynthesis; thiamine diphosphate biosynthesis; thiamine phosphate from 4-amino-2-methyl-5-diphosphomethylpyrimidine and 4-methyl-5-(2-phosphoethyl)-thiazole: step 1/1. Condenses 4-methyl-5-(beta-hydroxyethyl)thiazole monophosphate (THZ-P) and 2-methyl-4-amino-5-hydroxymethyl pyrimidine pyrophosphate (HMP-PP) to form thiamine monophosphate (TMP). The sequence is that of Thiamine-phosphate synthase from Bacillus cereus (strain 03BB102).